We begin with the raw amino-acid sequence, 476 residues long: Glycogen synthase (476 aa).

ADP-alpha-D-glucose is bound at residue lysine 15.

This sequence belongs to the glycosyltransferase 1 family. Bacterial/plant glycogen synthase subfamily.

The enzyme catalyses [(1-&gt;4)-alpha-D-glucosyl](n) + ADP-alpha-D-glucose = [(1-&gt;4)-alpha-D-glucosyl](n+1) + ADP + H(+). Its pathway is glycan biosynthesis; glycogen biosynthesis. Functionally, synthesizes alpha-1,4-glucan chains using ADP-glucose. The protein is Glycogen synthase of Bacillus cereus (strain ZK / E33L).